The sequence spans 87 residues: Kappa-5-bungarotoxin (87 aa).

The first 21 residues, 1–21, serve as a signal peptide directing secretion; sequence MKTLLLTLVVVTIVCLDLGYT. 5 disulfides stabilise this stretch: Cys-24-Cys-42, Cys-35-Cys-63, Cys-48-Cys-52, Cys-67-Cys-79, and Cys-80-Cys-85.

The protein belongs to the three-finger toxin family. Long-chain subfamily. Kappa-neurotoxin sub-subfamily. Homo- and heterodimer; non-covalently linked. In terms of tissue distribution, expressed by the venom gland.

The protein resides in the secreted. In terms of biological role, postsynaptic neurotoxin that binds and inhibits neuronal nicotinic acetylcholine receptors (nAChR) with high affinity (IC(50)&lt;100 nM). Is a selective, and slowly reversible antagonist of alpha-3/CHRNA3-containing and some alpha-4/CHRNA4-containing AChRs. The sequence is that of Kappa-5-bungarotoxin from Bungarus multicinctus (Many-banded krait).